Reading from the N-terminus, the 145-residue chain is Peptidyl-lysine N-acetyltransferase YjaB (145 aa).

Residues 3–144 (INIRRSRHEE…KPYPLLNLIY (142 aa)) enclose the N-acetyltransferase domain.

This sequence belongs to the acetyltransferase family.

It catalyses the reaction L-lysyl-[protein] + acetyl-CoA = N(6)-acetyl-L-lysyl-[protein] + CoA + H(+). Functionally, N-epsilon-lysine acetyltransferase that catalyzes acetylation of a large number of proteins. The chain is Peptidyl-lysine N-acetyltransferase YjaB (yjaB) from Salmonella typhimurium (strain LT2 / SGSC1412 / ATCC 700720).